Consider the following 317-residue polypeptide: Beta-ketoacyl-[acyl-carrier-protein] synthase III (317 aa).

Active-site residues include cysteine 112 and histidine 244. The segment at 245–249 (QANIR) is ACP-binding. Asparagine 274 is an active-site residue.

This sequence belongs to the thiolase-like superfamily. FabH family. In terms of assembly, homodimer.

It localises to the cytoplasm. It catalyses the reaction malonyl-[ACP] + acetyl-CoA + H(+) = 3-oxobutanoyl-[ACP] + CO2 + CoA. It functions in the pathway lipid metabolism; fatty acid biosynthesis. In terms of biological role, catalyzes the condensation reaction of fatty acid synthesis by the addition to an acyl acceptor of two carbons from malonyl-ACP. Catalyzes the first condensation reaction which initiates fatty acid synthesis and may therefore play a role in governing the total rate of fatty acid production. Possesses both acetoacetyl-ACP synthase and acetyl transacylase activities. Its substrate specificity determines the biosynthesis of branched-chain and/or straight-chain of fatty acids. The chain is Beta-ketoacyl-[acyl-carrier-protein] synthase III from Rickettsia typhi (strain ATCC VR-144 / Wilmington).